Consider the following 292-residue polypeptide: Fat storage-inducing transmembrane protein 1 (292 aa).

The Lumenal portion of the chain corresponds to 1–18 (MERGPVVGAGLGAGARIQ). A helical transmembrane segment spans residues 19 to 39 (ALLGCLLKVLLWVASALLYFG). Residues 40–54 (SEQAARLLGSPCLRR) are Cytoplasmic-facing. The chain crosses the membrane as a helical span at residues 55 to 75 (LYHAWLAAVVIFGPLLQFHVN). Residues 76–94 (PRTIFASHGNFFNIKFVNS) lie on the Lumenal side of the membrane. A helical transmembrane segment spans residues 95–115 (AWGWTCTFLGGFVLLVVFLAT). Over 116 to 141 (RRVAVTARHLSRLVVGAAVWRGAGRA) the chain is Cytoplasmic. A helical membrane pass occupies residues 142–162 (FLLIEDLTGSCFEPLPQGLLL). Topologically, residues 163–187 (HELPDRRSCLAAGHQWRGYTVSSHT) are lumenal. His-186 is an active-site residue. Residues 188–208 (FLLTFCCLLMAEEAAVFAKYL) traverse the membrane as a helical segment. At 209 to 220 (AHGLPAGAPLRL) the chain is on the cytoplasmic side. Residues 221–241 (VFLLNVLLLGLWNFLLLCTVI) traverse the membrane as a helical segment. At 242 to 249 (YFHQYTHK) the chain is on the lumenal side. Residue His-244 is part of the active site. A helical membrane pass occupies residues 250 to 270 (VVGAAVGTFAWYLTYGSWYHQ). The Cytoplasmic segment spans residues 271–292 (PWSPGSPGHGLFPRPHSSRKHN).

This sequence belongs to the FIT family. FIT1 subfamily. In terms of tissue distribution, primarily expressed in heart and skeletal muscle.

Its subcellular location is the endoplasmic reticulum membrane. Its function is as follows. Plays an important role in the formation of lipid droplets (LDs) which are storage organelles at the center of lipid and energy homeostasis. Directly binds to diacylglycerol (DAGs) and triacylglycerol. The polypeptide is Fat storage-inducing transmembrane protein 1 (Homo sapiens (Human)).